The following is a 431-amino-acid chain: 3-phosphoshikimate 1-carboxyvinyltransferase (431 aa).

Residues K22, S23, and R27 each coordinate 3-phosphoshikimate. K22 is a phosphoenolpyruvate binding site. 2 residues coordinate phosphoenolpyruvate: G94 and R122. 3-phosphoshikimate-binding residues include S167, Q169, D315, and K342. Q169 serves as a coordination point for phosphoenolpyruvate. D315 (proton acceptor) is an active-site residue. Phosphoenolpyruvate is bound by residues R346 and R388.

The protein belongs to the EPSP synthase family. In terms of assembly, monomer.

It localises to the cytoplasm. The enzyme catalyses 3-phosphoshikimate + phosphoenolpyruvate = 5-O-(1-carboxyvinyl)-3-phosphoshikimate + phosphate. Its pathway is metabolic intermediate biosynthesis; chorismate biosynthesis; chorismate from D-erythrose 4-phosphate and phosphoenolpyruvate: step 6/7. Its function is as follows. Catalyzes the transfer of the enolpyruvyl moiety of phosphoenolpyruvate (PEP) to the 5-hydroxyl of shikimate-3-phosphate (S3P) to produce enolpyruvyl shikimate-3-phosphate and inorganic phosphate. In Pelobacter propionicus (strain DSM 2379 / NBRC 103807 / OttBd1), this protein is 3-phosphoshikimate 1-carboxyvinyltransferase.